The chain runs to 127 residues: Large ribosomal subunit protein eL8 (127 aa).

Belongs to the eukaryotic ribosomal protein eL8 family. Part of the 50S ribosomal subunit. Probably part of the RNase P complex.

It is found in the cytoplasm. In terms of biological role, multifunctional RNA-binding protein that recognizes the K-turn motif in ribosomal RNA, the RNA component of RNase P, box H/ACA, box C/D and box C'/D' sRNAs. This Aeropyrum pernix (strain ATCC 700893 / DSM 11879 / JCM 9820 / NBRC 100138 / K1) protein is Large ribosomal subunit protein eL8.